Here is a 570-residue protein sequence, read N- to C-terminus: Keratin, type I cytoskeletal 10 (570 aa).

The segment covering Met-1–Arg-16 has biased composition (low complexity). A disordered region spans residues Met-1–Ser-29. Residues Met-1–Asn-143 are head. 2 positions are modified to phosphoserine: Ser-15 and Ser-17. Asymmetric dimethylarginine; alternate is present on Arg-32. At Arg-32 the chain carries Omega-N-methylarginine; alternate. Phosphoserine is present on residues Ser-34, Ser-45, Ser-48, and Ser-168. The interval Gly-144–Trp-179 is coil 1A. Residues Gly-144–Ser-458 form the IF rod domain. Residues Tyr-180 to Thr-200 are linker 1. Residues Ile-201–Leu-292 are coil 1B. Residues Gln-293–Leu-315 are linker 12. The tract at residues Leu-316–Glu-454 is coil 2. A disordered region spans residues Leu-451–Tyr-570. The interval Gly-455 to Tyr-570 is tail. Gly residues predominate over residues Ser-456–Asp-562.

The protein belongs to the intermediate filament family. As to quaternary structure, (Microbial infection) Interacts (via C-terminal tail domain) with the S.aureus clumping factor, clfB; this interaction probably mediates S.aureus attachment to the highly keratinized squamous epithelial cells from the nasal cavity. Heterotetramer of two type I and two type II keratins. Heterodimer with KRT1. Two heterodimers of KRT1 and KRT10 form a heterotetramer. The KRT10 subunit in the heterotetramer is probably disulfide-linked. Interacts with PLEC isoform 1C, when in a heterodimer with KRT1. In terms of assembly, (Microbial infection) Interacts (via the C-terminal tail domain) with S.pneumoniae serine-rich repeat protein PsrP; this interaction probably mediates S.pneumoniae adherence to lung tissue and subsequent pathogenesis. Expressed in the suprabasal layers of the epidermis throughout the entire sole (at protein level). Expressed in the infundibular regions of the ear, the interscale regions of the tail, and the interfollicular epidermis of the back. Expressed in lung tissue from young mice (at protein level).

It is found in the secreted. Its subcellular location is the extracellular space. The protein resides in the cell surface. It localises to the cytoplasm. Its function is as follows. Plays a role in the establishment of the epidermal barrier on plantar skin. Involved in the maintenance of cell layer development and keratin filament bundles in suprabasal cells of the epithelium. Functionally, (Microbial infection) Acts as a mediator of S.aureus adherence to desquamated nasal epithelial cells via clfB, and hence may play a role in nasal colonization. (Microbial infection) Binds S.pneumoniae PsrP, mediating adherence of the bacteria to lung cell lines. This is Keratin, type I cytoskeletal 10 (Krt10) from Mus musculus (Mouse).